The primary structure comprises 100 residues: Integration host factor subunit beta (100 aa).

Belongs to the bacterial histone-like protein family. As to quaternary structure, heterodimer of an alpha and a beta chain.

This protein is one of the two subunits of integration host factor, a specific DNA-binding protein that functions in genetic recombination as well as in transcriptional and translational control. This Agrobacterium fabrum (strain C58 / ATCC 33970) (Agrobacterium tumefaciens (strain C58)) protein is Integration host factor subunit beta.